Reading from the N-terminus, the 209-residue chain is Guanylate kinase (209 aa).

In terms of domain architecture, Guanylate kinase-like spans 8-186 (GVLYIVSAPS…ALQDLVAITR (179 aa)). An ATP-binding site is contributed by 15–22 (APSGAGKT).

The protein belongs to the guanylate kinase family.

It is found in the cytoplasm. The enzyme catalyses GMP + ATP = GDP + ADP. Functionally, essential for recycling GMP and indirectly, cGMP. This Thiobacillus denitrificans (strain ATCC 25259 / T1) protein is Guanylate kinase.